We begin with the raw amino-acid sequence, 326 residues long: Holliday junction branch migration complex subunit RuvB (326 aa).

The segment at 1–180 is large ATPase domain (RuvB-L); the sequence is MKSISCGKEY…FGIPLHLEFY (180 aa). ATP-binding positions include isoleucine 19, arginine 20, glycine 61, lysine 64, threonine 65, threonine 66, 127–129, arginine 170, tyrosine 180, and arginine 217; that span reads EDF. Threonine 65 provides a ligand contact to Mg(2+). Positions 181–251 are small ATPAse domain (RuvB-S); it reads SFEELVNIIK…VADSVLLKLG (71 aa). Residues 254-326 form a head domain (RuvB-H) region; it reads KMGLNKLDMN…QAKEYLSFQH (73 aa). 2 residues coordinate DNA: arginine 307 and arginine 312.

This sequence belongs to the RuvB family. In terms of assembly, homohexamer. Forms an RuvA(8)-RuvB(12)-Holliday junction (HJ) complex. HJ DNA is sandwiched between 2 RuvA tetramers; dsDNA enters through RuvA and exits via RuvB. An RuvB hexamer assembles on each DNA strand where it exits the tetramer. Each RuvB hexamer is contacted by two RuvA subunits (via domain III) on 2 adjacent RuvB subunits; this complex drives branch migration. In the full resolvosome a probable DNA-RuvA(4)-RuvB(12)-RuvC(2) complex forms which resolves the HJ.

Its subcellular location is the cytoplasm. It carries out the reaction ATP + H2O = ADP + phosphate + H(+). Functionally, the RuvA-RuvB-RuvC complex processes Holliday junction (HJ) DNA during genetic recombination and DNA repair, while the RuvA-RuvB complex plays an important role in the rescue of blocked DNA replication forks via replication fork reversal (RFR). RuvA specifically binds to HJ cruciform DNA, conferring on it an open structure. The RuvB hexamer acts as an ATP-dependent pump, pulling dsDNA into and through the RuvAB complex. RuvB forms 2 homohexamers on either side of HJ DNA bound by 1 or 2 RuvA tetramers; 4 subunits per hexamer contact DNA at a time. Coordinated motions by a converter formed by DNA-disengaged RuvB subunits stimulates ATP hydrolysis and nucleotide exchange. Immobilization of the converter enables RuvB to convert the ATP-contained energy into a lever motion, pulling 2 nucleotides of DNA out of the RuvA tetramer per ATP hydrolyzed, thus driving DNA branch migration. The RuvB motors rotate together with the DNA substrate, which together with the progressing nucleotide cycle form the mechanistic basis for DNA recombination by continuous HJ branch migration. Branch migration allows RuvC to scan DNA until it finds its consensus sequence, where it cleaves and resolves cruciform DNA. This is Holliday junction branch migration complex subunit RuvB from Wolbachia pipientis wMel.